Here is a 215-residue protein sequence, read N- to C-terminus: Protein C' (215 aa).

The interval 12 to 34 (MPSFLKKILKLRGRRQEDESRSR) is disordered. Residues 15–22 (FLKKILKL) form an involved in self-degradation and in host STAT1 degradation region.

This sequence belongs to the respirovirus protein C family. As to quaternary structure, the different isoforms interact (via C-terminus) with unphosphorylated and phosphorylated human STAT1 (via N-terminus), favoring the formation of parallel STAT1 homodimers. The different isoforms do not interact with host STAT2. C protein interacts with L protein; this interaction has an inhibitory effect on viral transcription and replication. In terms of processing, protein Y2 is produced not only by alternative initiation, but also by proteolytic cleavage of C'. Only alternative initiation is detected in vitro, whereas in vivo cleavage seems to be predominant.

Its subcellular location is the host cytoplasm. The different products prevent the establishment of cellular antiviral state by blocking the interferon-alpha/beta (IFN-alpha/beta) and IFN-gamma signaling pathways. They inhibit IFN-alpha/beta induced tyrosine phosphorylation of STAT1 and STAT2. Blocking the IFN-alpha/beta pathway requires binding to STAT1 in the cytoplasm. They inhibit IFN-gamma induced serine phosphorylation of STAT1. Block the IFN-gamma pathway by binding to and stabilizing the parallel form of the STAT1 dimer, further inducing high-molecular-weight complex formation and inhibition of transcription by IFN-gamma. May also have a role in preventing the cell to enter apoptosis. Modulate regulation of viral transcription and replication. Overexpression inhibits the viral RNA polymerase. The absence of all C', C and Y2 proteins leads to viral delayed growth. Plays an important role in virion particles release. Modulates virion shape. The chain is Protein C' (P/V/C) from Cavia cutleri (Guinea pig).